We begin with the raw amino-acid sequence, 345 residues long: Glycerol-3-phosphate dehydrogenase [NAD(P)+] (345 aa).

NADPH is bound by residues S23, Y24, H44, and K118. Positions 118, 147, and 149 each coordinate sn-glycerol 3-phosphate. An NADPH-binding site is contributed by A151. K203, D256, S266, R267, and N268 together coordinate sn-glycerol 3-phosphate. The active-site Proton acceptor is the K203. Residue R267 participates in NADPH binding. NADPH contacts are provided by V291 and E293.

Belongs to the NAD-dependent glycerol-3-phosphate dehydrogenase family.

Its subcellular location is the cytoplasm. It catalyses the reaction sn-glycerol 3-phosphate + NAD(+) = dihydroxyacetone phosphate + NADH + H(+). The enzyme catalyses sn-glycerol 3-phosphate + NADP(+) = dihydroxyacetone phosphate + NADPH + H(+). It functions in the pathway membrane lipid metabolism; glycerophospholipid metabolism. Its function is as follows. Catalyzes the reduction of the glycolytic intermediate dihydroxyacetone phosphate (DHAP) to sn-glycerol 3-phosphate (G3P), the key precursor for phospholipid synthesis. This Vibrio campbellii (strain ATCC BAA-1116) protein is Glycerol-3-phosphate dehydrogenase [NAD(P)+].